The chain runs to 197 residues: GTP cyclohydrolase-2 (197 aa).

Residue 49–53 (RVHSE) coordinates GTP. Residues cysteine 54, cysteine 65, and cysteine 67 each coordinate Zn(2+). Residues glutamine 70, 92–94 (EGR), and threonine 114 contribute to the GTP site. The Proton acceptor role is filled by aspartate 126. Arginine 128 functions as the Nucleophile in the catalytic mechanism. GTP contacts are provided by threonine 149 and lysine 154.

Belongs to the GTP cyclohydrolase II family. As to quaternary structure, homodimer. Zn(2+) is required as a cofactor.

The enzyme catalyses GTP + 4 H2O = 2,5-diamino-6-hydroxy-4-(5-phosphoribosylamino)-pyrimidine + formate + 2 phosphate + 3 H(+). It functions in the pathway cofactor biosynthesis; riboflavin biosynthesis; 5-amino-6-(D-ribitylamino)uracil from GTP: step 1/4. In terms of biological role, catalyzes the conversion of GTP to 2,5-diamino-6-ribosylamino-4(3H)-pyrimidinone 5'-phosphate (DARP), formate and pyrophosphate. The sequence is that of GTP cyclohydrolase-2 from Pectobacterium atrosepticum (strain SCRI 1043 / ATCC BAA-672) (Erwinia carotovora subsp. atroseptica).